We begin with the raw amino-acid sequence, 90 residues long: uncharacterized protein (90 aa).

It is found in the mitochondrion. This is an uncharacterized protein from Ascobolus immersus.